The following is a 379-amino-acid chain: MSELSFDAPVWHHGKALRKGYTTGSCATAAAKVAALMVLRQHLIHQVSIVTPSGVTLCLNVESPHIEGQQAIAAIRKDGGDDVDATHGMLIFARVTLNDSGEITLTGGEGIGTVTRKGIGLPLGSAAINRTPRHTIESAVREAIGPARGADVEIFAPEGEARAQKTYNSRLGILGGISIIGTTGIVTPMSEESWKRSLSLELEIKRASGLTRVILVPGNHGERFVREQMGVDTQAVVTMSNFVGYMIEEAVRLGFCQIVLVGHPGKLIKIAAGIFHTHSHIADARMETLVAHLALLGAPLELLTLVSDCDTTEAAMEHIEAYGFGHIYNHLARRICLRVMQMLRFTKTPPVCDAILFSFDNHILGSNRPVDEIAKELQC.

It belongs to the CbiD family.

It carries out the reaction Co-precorrin-5B + S-adenosyl-L-methionine = Co-precorrin-6A + S-adenosyl-L-homocysteine. It participates in cofactor biosynthesis; adenosylcobalamin biosynthesis; cob(II)yrinate a,c-diamide from sirohydrochlorin (anaerobic route): step 6/10. Catalyzes the methylation of C-1 in cobalt-precorrin-5B to form cobalt-precorrin-6A. This is Cobalt-precorrin-5B C(1)-methyltransferase from Salmonella typhimurium (strain LT2 / SGSC1412 / ATCC 700720).